Reading from the N-terminus, the 316-residue chain is ATP synthase gamma chain (316 aa).

The protein belongs to the ATPase gamma chain family. In terms of assembly, F-type ATPases have 2 components, CF(1) - the catalytic core - and CF(0) - the membrane proton channel. CF(1) has five subunits: alpha(3), beta(3), gamma(1), delta(1), epsilon(1). CF(0) has three main subunits: a, b and c.

It localises to the cellular thylakoid membrane. Functionally, produces ATP from ADP in the presence of a proton gradient across the membrane. The gamma chain is believed to be important in regulating ATPase activity and the flow of protons through the CF(0) complex. This Prochlorococcus marinus (strain MIT 9515) protein is ATP synthase gamma chain.